The following is an 825-amino-acid chain: Zinc finger protein 28 (825 aa).

Positions 26–65 (RPGGGPAAGTVVAPGSPDRGRPRSRNSLASQDQQGAVTSG) are disordered. Over residues 33-42 (AGTVVAPGSP) the composition is skewed to low complexity. The span at 51–65 (NSLASQDQQGAVTSG) shows a compositional bias: polar residues. Positions 103-174 (VTFGDVAVVF…KRKMRKGQHL (72 aa)) constitute a KRAB domain. C2H2-type zinc fingers lie at residues 377–399 (FQCNECKKTFTQSSSLTVHQRIH), 405–427 (YKCNQCGKAFSDGSSFARHQRCH), 433–456 (YECPECGKAFIQNTSLVRHWRYYH), 462–484 (FDCIDCGKAFSDHIGLNQHRRIH), 490–512 (YTCEVCHKSFRYGSSLTVHQRIH), 518–540 (YECEICRKAFSHHASLTQHQRVH), 546–568 (FKCKECGKAFRQNIHLASHWRIH), 574–596 (FECGECGKSFSISSQLATHQRIH), 602–624 (YECKVCRKAFTQKAHLAQHQKTH), 630–652 (YECKECGKAFSQTTHLIQHQRVH), 658–680 (YKCLECGKAFGDNSSCTQHRRLH), 686–708 (YECVECGKTFKTKSSLICHRRCH), 714–736 (YECSACGKAFSHRQSLSVHQRIH), and 742–764 (YECKECRKTFIQIGHLNQHKRVH). A C2H2-type 15; degenerate zinc finger spans residues 770–792 (YNYKKGRRAFRQTAHFAHHQQIH).

This sequence belongs to the krueppel C2H2-type zinc-finger protein family. In terms of tissue distribution, expressed predominantly in ovary.

Its subcellular location is the nucleus. In terms of biological role, may be involved in transcriptional regulation. May have a role in embryonic development. The protein is Zinc finger protein 28 (Zfp28) of Mus musculus (Mouse).